Reading from the N-terminus, the 807-residue chain is Glycerol-3-phosphate acyltransferase (807 aa).

The HXXXXD motif motif lies at 308–313; the sequence is CHRSHM.

It belongs to the GPAT/DAPAT family.

It localises to the cell inner membrane. The enzyme catalyses sn-glycerol 3-phosphate + an acyl-CoA = a 1-acyl-sn-glycero-3-phosphate + CoA. It participates in phospholipid metabolism; CDP-diacylglycerol biosynthesis; CDP-diacylglycerol from sn-glycerol 3-phosphate: step 1/3. This chain is Glycerol-3-phosphate acyltransferase, found in Shewanella sp. (strain W3-18-1).